Reading from the N-terminus, the 392-residue chain is Speckle-type POZ protein-like (392 aa).

Residues 31–161 form the MATH domain; the sequence is KFSYMWTINN…DDKLTLFCEV (131 aa). Residues 200 to 267 enclose the BTB domain; that stretch reads TDCSFFVRGQ…IYTGRAPNLD (68 aa).

This sequence belongs to the Tdpoz family. In terms of assembly, homodimer. Heterodimer with SPOP. Component of cullin-RING-based BCR (BTB-CUL3-RBX1) E3 ubiquitin-protein ligase complexes containing homodimeric SPOPL or the heterodimer formed by SPOP and SPOPL. Interacts with CUL3 and MACROH2A1.

The protein resides in the nucleus. It participates in protein modification; protein ubiquitination. Component of a cullin-RING-based BCR (BTB-CUL3-RBX1) E3 ubiquitin-protein ligase complex that mediates the ubiquitination and subsequent proteasomal degradation of target proteins, but with relatively low efficiency. Cullin-RING-based BCR (BTB-CUL3-RBX1) E3 ubiquitin-protein ligase complexes containing homodimeric SPOPL or the heterodimer formed by SPOP and SPOPL are less efficient than ubiquitin ligase complexes containing only SPOP. May function to down-regulate the activity of cullin-RING-based BCR (BTB-CUL3-RBX1) E3 ubiquitin-protein ligase complexes that contain SPOP. This chain is Speckle-type POZ protein-like (SPOPL), found in Homo sapiens (Human).